A 411-amino-acid chain; its full sequence is Pre-mRNA-splicing factor dre4 (411 aa).

Positions 3–36 (QPLPPGWTEHKAPSGIPYYWNAELKKSTYQRPSF) constitute a WW 1 domain. The segment at 65-84 (NAEERKNSRDLRKQLPDRPK) is disordered. The span at 66 to 83 (AEERKNSRDLRKQLPDRP) shows a compositional bias: basic and acidic residues. Residues 89–122 (IPNNDSWVVVFTKKNRYFFHNLKSHESYWEPPLE) enclose the WW 2 domain. The interval 138–209 (ISKDSSQSQN…KSHSAEELEF (72 aa)) is disordered. Over residues 140–151 (KDSSQSQNVDSG) the composition is skewed to polar residues. Positions 152–166 (KTNHEEIHESRHLQT) are enriched in basic and acidic residues. Residues 167–179 (EIEEPSGLEESSE) show a composition bias toward acidic residues. Residues 239–293 (TDDARRVFTELLKDKNIGAYQPWELVYPKLLDDDRFYVLDSGERRKEVFEEYCKS) enclose the FF domain.

In terms of assembly, component of the spliceosomal complex. Interacts with prp19.

The protein localises to the nucleus. Component of the spliceosome involved in mRNA processing. This Schizosaccharomyces pombe (strain 972 / ATCC 24843) (Fission yeast) protein is Pre-mRNA-splicing factor dre4 (dre4).